We begin with the raw amino-acid sequence, 355 residues long: uncharacterized protein (355 aa).

The protein belongs to the TmcAL family.

This is an uncharacterized protein from Methanocaldococcus jannaschii (strain ATCC 43067 / DSM 2661 / JAL-1 / JCM 10045 / NBRC 100440) (Methanococcus jannaschii).